A 109-amino-acid polypeptide reads, in one-letter code: UPF0122 protein CLL_A1244 (109 aa).

Belongs to the UPF0122 family.

Might take part in the signal recognition particle (SRP) pathway. This is inferred from the conservation of its genetic proximity to ftsY/ffh. May be a regulatory protein. In Clostridium botulinum (strain Eklund 17B / Type B), this protein is UPF0122 protein CLL_A1244.